A 236-amino-acid polypeptide reads, in one-letter code: MATTHLDVCAVVPAAGFGRRMQTECPKQYLSIGNQTILEHSVHALLAHPRVKHVVIAISPGDSRFAQLPLANHPQITVVDGGEERADSVLAGLKAAGDAQWVLVHDAARPCLHQDDLARLLALSETSRTGGILAAPVRDTMKRAEPGKNAIAHTVDRNGLWHALTPQFFPRELLHDCLTRALNEGATITDEASALEYCGFHPQLVEGRADNIKVTRPEDLALAEFYLTRTIHQENT.

The protein belongs to the IspD/TarI cytidylyltransferase family. IspD subfamily. In terms of assembly, homodimer.

It carries out the reaction 2-C-methyl-D-erythritol 4-phosphate + CTP + H(+) = 4-CDP-2-C-methyl-D-erythritol + diphosphate. It functions in the pathway isoprenoid biosynthesis; isopentenyl diphosphate biosynthesis via DXP pathway; isopentenyl diphosphate from 1-deoxy-D-xylulose 5-phosphate: step 2/6. Catalyzes the formation of 4-diphosphocytidyl-2-C-methyl-D-erythritol from CTP and 2-C-methyl-D-erythritol 4-phosphate (MEP). The sequence is that of 2-C-methyl-D-erythritol 4-phosphate cytidylyltransferase from Escherichia coli O7:K1 (strain IAI39 / ExPEC).